A 234-amino-acid chain; its full sequence is Coiled-coil domain-containing protein 194 (234 aa).

Positions M1 to A43 are cleaved as a signal peptide. The disordered stretch occupies residues R44–S63. A coiled-coil region spans residues V67–A171. The interval G194–Q234 is disordered. Over residues R203–K219 the composition is skewed to basic residues.

This chain is Coiled-coil domain-containing protein 194, found in Mus musculus (Mouse).